The following is a 512-amino-acid chain: Cytochrome P450 monooxygenase gliC (512 aa).

Residues methionine 1–alanine 19 form the signal peptide. N-linked (GlcNAc...) asparagine glycosylation is found at asparagine 118, asparagine 421, and asparagine 434. Cysteine 452 is a heme binding site.

It belongs to the cytochrome P450 family. The cofactor is heme.

It participates in mycotoxin biosynthesis. Functionally, cytochrome P450 monooxygenase; part of the gene cluster that mediates the biosynthesis of gliotoxin, a member of the epipolythiodioxopiperazine (ETP) class of toxins characterized by a disulfide bridged cyclic dipeptide. The first step in gliotoxin biosynthesis is the condensation of serine and phenylalanine to form the cyclo-L-phenylalanyl-L-serine diketopiperazine (DKP) by the NRPS gliP. GliP is also able to produce the DKP cyclo-L-tryptophanyl-L-serine, suggesting that the substrate specificity of the first adenylation (A) domain in gliP is sufficiently relaxed to accommodate both L-Phe and L-Trp. The cytochrome P450 monooxygenase gliC has been shown to catalyze the subsequent hydroxylation of the alpha-carbon of L-Phe in cyclo-L-phenylalanyl-L-serine whereas the second cytochrome P450 enzyme, gliF, is presumably involved in the modification of the DKP side chain. The glutathione S-transferase (GST) gliG then forms a bis-glutathionylated biosynthetic intermediate which is responsible for the sulfurization of gliotoxin. This bis-glutathionylated intermediate is subsequently processed by the gamma-glutamyl cyclotransferase gliK to remove both gamma-glutamyl moieties. Subsequent processing via gliI yields a biosynthetic intermediate, which is N-methylated via the N-methyltransferase gliN, before the gliotoxin oxidoreductase gliT-mediated disulfide bridge closure. GliN-mediated amide methylation confers stability to ETP, damping the spontaneous formation of tri- and tetrasulfides. Intracellular dithiol gliotoxin oxidized by gliT is subsequently effluxed by gliA. Gliotoxin contributes to pathogenesis during invasive aspergillosis. In macrophages and neutrophils, gliotoxin showed inhibition of various different cell functions including cytokine production, antigen presentation, phagocytosis, and production of reactive oxygen species. This Aspergillus fumigatus (strain ATCC MYA-4609 / CBS 101355 / FGSC A1100 / Af293) (Neosartorya fumigata) protein is Cytochrome P450 monooxygenase gliC.